A 353-amino-acid chain; its full sequence is Peptide chain release factor 1 (353 aa).

Q230 bears the N5-methylglutamine mark.

The protein belongs to the prokaryotic/mitochondrial release factor family. In terms of processing, methylated by PrmC. Methylation increases the termination efficiency of RF1.

The protein localises to the cytoplasm. In terms of biological role, peptide chain release factor 1 directs the termination of translation in response to the peptide chain termination codons UAG and UAA. The chain is Peptide chain release factor 1 from Leptospira biflexa serovar Patoc (strain Patoc 1 / ATCC 23582 / Paris).